Consider the following 330-residue polypeptide: RNA/RNP complex-1-interacting phosphatase (330 aa).

Over residues 1 to 12 the composition is skewed to basic residues; the sequence is MSQWHHPRSGWG. Positions 1–32 are disordered; it reads MSQWHHPRSGWGRRRDFSGRSSAKKKGGNHIP. The Tyrosine-protein phosphatase domain maps to 61–208; sequence FEKKLAPEEC…LQNGPIRKNW (148 aa). The Phosphocysteine intermediate role is filled by Cys-152. 153-158 contributes to the substrate binding site; it reads THGLNR. Residue Arg-158 is the Proton donor/acceptor of the active site.

This sequence belongs to the protein-tyrosine phosphatase family. Non-receptor class dual specificity subfamily. As to quaternary structure, monomer. May interact with SFRS7 and SFRS9/SRP30C.

Its subcellular location is the nucleus. The protein localises to the nucleus speckle. Its function is as follows. Possesses RNA 5'-triphosphatase and diphosphatase activities, but displays a poor protein-tyrosine phosphatase activity. In addition, has phosphatase activity with ATP, ADP and O-methylfluorescein phosphate (in vitro). Binds to RNA. May participate in nuclear mRNA metabolism. This is RNA/RNP complex-1-interacting phosphatase from Homo sapiens (Human).